The following is a 397-amino-acid chain: MAKKTIDQIDVQDKTVLMRVDFNVPLDESLAITDDRRIRMALPSIKSVIDRGGKVILMSHLGRPTGGEGDEKYSLAPAAKRLGELLGSTVHFATDTVGDDASSKASSLAAGEVLVLENLRFNPGEKKGDSEFAGKLAAMADAYCNDAFGTCHRKDASMVAVPEAMAGKPRVVGHLVAKEIQYLTDAISKPERPFVAILGGAKVSDKINVINNLLGICDAVLIGGAMAYTFSLASGGKVGKSLVEKDKVELAKELMAKGGDKLQLPVDTHCGDDFGNIAGCNKKVVAAGEIPDDMEGLDIGPETAKKYAEVIKSAKTIVWNGPMGVFEKPPMDEGTKAVAQAIADGDAVSIIGGGDSAAAVDQLGFADDVSHVSTGGGASLAMLEGQAFAAVDLLDEA.

Substrate is bound by residues 21-23, arginine 37, 60-63, arginine 120, and arginine 153; these read DFN and HLGR. ATP contacts are provided by residues lysine 206, glycine 296, glutamate 327, and 353-356; that span reads GGDS.

It belongs to the phosphoglycerate kinase family. In terms of assembly, monomer.

The protein localises to the cytoplasm. The enzyme catalyses (2R)-3-phosphoglycerate + ATP = (2R)-3-phospho-glyceroyl phosphate + ADP. It functions in the pathway carbohydrate degradation; glycolysis; pyruvate from D-glyceraldehyde 3-phosphate: step 2/5. The sequence is that of Phosphoglycerate kinase from Rhodopirellula baltica (strain DSM 10527 / NCIMB 13988 / SH1).